We begin with the raw amino-acid sequence, 275 residues long: Lectin (275 aa).

A signal peptide spans 1–30 (MASLQTQMISFYAIFLSILLTTILFFKVNS). Mn(2+) contacts are provided by Glu-149 and Asp-151. Residues Asp-151, Phe-153, Asn-155, and Asp-159 each contribute to the Ca(2+) site. Mn(2+) contacts are provided by Asp-159 and His-166. N-linked (GlcNAc...) asparagine glycosylation occurs at Asn-217.

Belongs to the leguminous lectin family. In terms of assembly, tetramer of two alpha and two beta chains.

In terms of biological role, D-mannose specific lectin. In Pisum sativum (Garden pea), this protein is Lectin (LECA).